Consider the following 95-residue polypeptide: Secretoglobin family 1C member 1 (95 aa).

Positions 1–23 are cleaved as a signal peptide; that stretch reads MKGSSALLLVALSLLCVCGLTRA.

Belongs to the secretoglobin family.

Its subcellular location is the secreted. This chain is Secretoglobin family 1C member 1 (Scgb1c1), found in Mus musculus (Mouse).